A 504-amino-acid chain; its full sequence is MQQSTPYLSFRGIGKTFPGVKALTDISFDCYAGQVHALMGENGAGKSTLLKILSGNYAPTTGSVVINGQEMSFSDTTAALNAGVAIIYQELHLVPEMTVAENIYLGQLPHKGGIVNRSLLNYEAGLQLKHLGMDIDPDTPLKYLAIGQWQMVEIAKALARNAKIIAFDEPTSSLSAREIGNLFRVIRELRKEGRVILYVSHRMEEIFALSDAITVFKDGRYVKTFTDMQQVDHDALVQAMVGRDIGDIYGWQPRSYGEERLRLDAVKALGVRTPISLAVRSGEIVGLFGLVGAGRSELMKGLFGGTQITAGQVYIDQQPIDIRKPSHAIAAGMMLCPEARKAEGIIPVHSVRDNINISARRKHVLGGCVINNSWEENNADQHIRSLNIKTPGAEQLIMNLSGGNQQKAILGRWLSEEMKVILLDEPTRGIDVGAKHEIYNVIYALAAQGVAVLFASSDLPEVLGVADRIVVMREGEIAGELLHEQADERQALSLAMPKVSQAVA.

2 consecutive ABC transporter domains span residues 8-243 (LSFR…MVGR) and 256-499 (YGEE…MPKV). 40 to 47 (GENGAGKS) contributes to the ATP binding site.

This sequence belongs to the ABC transporter superfamily. Arabinose importer (TC 3.A.1.2.2) family. As to quaternary structure, the complex is composed of two ATP-binding proteins (AraG), two transmembrane proteins (AraH) and a solute-binding protein (AraF).

The protein localises to the cell inner membrane. The catalysed reaction is L-arabinose(out) + ATP + H2O = L-arabinose(in) + ADP + phosphate + H(+). Part of the ABC transporter complex AraFGH involved in arabinose import. Responsible for energy coupling to the transport system. The chain is Arabinose import ATP-binding protein AraG from Shigella flexneri.